Reading from the N-terminus, the 269-residue chain is Formamidopyrimidine-DNA glycosylase (269 aa).

The Schiff-base intermediate with DNA role is filled by proline 2. The Proton donor role is filled by glutamate 3. The Proton donor; for beta-elimination activity role is filled by lysine 57. DNA-binding residues include histidine 90, arginine 109, and lysine 150. The segment at 235–269 (QVYGREGEPCRVCGTPILAGKHAQRRTYWCRRCQK) adopts an FPG-type zinc-finger fold. Arginine 259 acts as the Proton donor; for delta-elimination activity in catalysis.

Belongs to the FPG family. As to quaternary structure, monomer. Requires Zn(2+) as cofactor.

It catalyses the reaction Hydrolysis of DNA containing ring-opened 7-methylguanine residues, releasing 2,6-diamino-4-hydroxy-5-(N-methyl)formamidopyrimidine.. It carries out the reaction 2'-deoxyribonucleotide-(2'-deoxyribose 5'-phosphate)-2'-deoxyribonucleotide-DNA = a 3'-end 2'-deoxyribonucleotide-(2,3-dehydro-2,3-deoxyribose 5'-phosphate)-DNA + a 5'-end 5'-phospho-2'-deoxyribonucleoside-DNA + H(+). Involved in base excision repair of DNA damaged by oxidation or by mutagenic agents. Acts as a DNA glycosylase that recognizes and removes damaged bases. Has a preference for oxidized purines, such as 7,8-dihydro-8-oxoguanine (8-oxoG). Has AP (apurinic/apyrimidinic) lyase activity and introduces nicks in the DNA strand. Cleaves the DNA backbone by beta-delta elimination to generate a single-strand break at the site of the removed base with both 3'- and 5'-phosphates. This is Formamidopyrimidine-DNA glycosylase from Cronobacter sakazakii (strain ATCC BAA-894) (Enterobacter sakazakii).